Reading from the N-terminus, the 608-residue chain is Aspartate--tRNA(Asp/Asn) ligase (608 aa).

E175 is a binding site for L-aspartate. The aspartate stretch occupies residues 199-202 (QLFK). Position 221 (R221) interacts with L-aspartate. ATP-binding positions include 221 to 223 (RDE) and Q230. H453 provides a ligand contact to L-aspartate. E487 lines the ATP pocket. R494 is a binding site for L-aspartate. Residue 539-542 (GWDR) participates in ATP binding. Residues 566 to 608 (IDPLTDAPAAITPQQRKEAGIDAKPKPKAEAQAEAQAEESAEK) form a disordered region. Basic and acidic residues predominate over residues 580-596 (QRKEAGIDAKPKPKAEA).

This sequence belongs to the class-II aminoacyl-tRNA synthetase family. Type 1 subfamily. Homodimer.

It is found in the cytoplasm. It catalyses the reaction tRNA(Asx) + L-aspartate + ATP = L-aspartyl-tRNA(Asx) + AMP + diphosphate. Functionally, aspartyl-tRNA synthetase with relaxed tRNA specificity since it is able to aspartylate not only its cognate tRNA(Asp) but also tRNA(Asn). Reaction proceeds in two steps: L-aspartate is first activated by ATP to form Asp-AMP and then transferred to the acceptor end of tRNA(Asp/Asn). This Corynebacterium glutamicum (strain R) protein is Aspartate--tRNA(Asp/Asn) ligase.